The sequence spans 564 residues: Proline--tRNA ligase (564 aa).

Belongs to the class-II aminoacyl-tRNA synthetase family. ProS type 1 subfamily. Homodimer.

The protein localises to the cytoplasm. It catalyses the reaction tRNA(Pro) + L-proline + ATP = L-prolyl-tRNA(Pro) + AMP + diphosphate. Catalyzes the attachment of proline to tRNA(Pro) in a two-step reaction: proline is first activated by ATP to form Pro-AMP and then transferred to the acceptor end of tRNA(Pro). As ProRS can inadvertently accommodate and process non-cognate amino acids such as alanine and cysteine, to avoid such errors it has two additional distinct editing activities against alanine. One activity is designated as 'pretransfer' editing and involves the tRNA(Pro)-independent hydrolysis of activated Ala-AMP. The other activity is designated 'posttransfer' editing and involves deacylation of mischarged Ala-tRNA(Pro). The misacylated Cys-tRNA(Pro) is not edited by ProRS. This Thermosipho melanesiensis (strain DSM 12029 / CIP 104789 / BI429) protein is Proline--tRNA ligase.